The primary structure comprises 70 residues: Probable U6 snRNA-associated Sm-like protein (70 aa).

The region spanning 3 to 70 (DPFCFLKMYL…ILFVGPRLLL (68 aa)) is the Sm domain.

The protein belongs to the snRNP Sm proteins family.

The protein resides in the nucleus. In terms of biological role, binds specifically to the 3'-terminal U-tract of U6 snRNA. The protein is Probable U6 snRNA-associated Sm-like protein of Encephalitozoon cuniculi (strain GB-M1) (Microsporidian parasite).